The following is a 229-amino-acid chain: Large ribosomal subunit protein uL1 (229 aa).

It belongs to the universal ribosomal protein uL1 family. In terms of assembly, part of the 50S ribosomal subunit.

Functionally, binds directly to 23S rRNA. The L1 stalk is quite mobile in the ribosome, and is involved in E site tRNA release. Protein L1 is also a translational repressor protein, it controls the translation of the L11 operon by binding to its mRNA. This is Large ribosomal subunit protein uL1 from Clostridium kluyveri (strain ATCC 8527 / DSM 555 / NBRC 12016 / NCIMB 10680 / K1).